We begin with the raw amino-acid sequence, 311 residues long: Phospholipid phosphatase 3 (311 aa).

Topologically, residues 1 to 33 (MQNYKYDKAIVAESKNGGSPALNNNPRKGGSKR) are cytoplasmic. Phosphoserine is present on Ser-19. Residues 34-54 (VLLICLDLFCLFMAGLPFIII) form a helical membrane-spanning segment. The Extracellular portion of the chain corresponds to 55–85 (ETSTIKPYHRGFYCNDESIKYPQKTGETIND). A helical transmembrane segment spans residues 86–106 (AVLTAVGIVIAILAIITGEFY). Residues 107 to 123 (RIYYLKEKSRSTIQNPY) are Cytoplasmic-facing. Positions 109-110 (YY) match the Dityrosine basolateral targeting motif motif. Residues 124 to 144 (VAALYKQVGCFLFGCAISQSF) form a helical membrane-spanning segment. Over 145-194 (TDIAKVSIGRLRPHFLNVCNPDFSQINCSVGYIQNYRCRGEDSKVQEARK) the chain is Extracellular. A phosphatase sequence motif I region spans residues 149 to 157 (KVSIGRLRP). N-linked (GlcNAc...) asparagine glycosylation occurs at Asn-171. The short motif at 183 to 185 (RGE) is the Integrin-binding motif element. The chain crosses the membrane as a helical span at residues 195-215 (SFFSGHASFSMYTMLYLVLYL). Positions 197 to 200 (FSGH) are phosphatase sequence motif II. Catalysis depends on His-200, which acts as the Proton donors. Topologically, residues 216 to 226 (QARFTWRGARL) are cytoplasmic. The helical transmembrane segment at 227–244 (LRPLLQFTLIMMAFYTGL) threads the bilayer. The segment at 245–256 (SRVSDHKHHPSD) is phosphatase sequence motif III. Residues 245-258 (SRVSDHKHHPSDVL) lie on the Extracellular side of the membrane. The Nucleophile role is filled by His-252. The helical transmembrane segment at 259–279 (AGFAQGALVACCIVFFVSDLF) threads the bilayer. Residues 276-311 (SDLFKTKTTLSLPPSAIRKDMLSPVDIDRSNHHNMV) are mediates interaction with CTNND1. Residues 280–311 (KTKTTLSLPPSAIRKDMLSPVDIDRSNHHNMV) are Cytoplasmic-facing.

It belongs to the PA-phosphatase related phosphoesterase family. Forms functional homodimers and homooligomers that are not required for substrate recognition and catalytic activity. Can also form heterooligomers with other PLPP2 and PLPP3. Interacts with CTNND1; negatively regulates the PLPP3-mediated stabilization of beta-catenin/CTNNB1. Post-translationally, N-glycosylated. Contains high-mannose oligosaccharides.

The protein localises to the cell membrane. It localises to the basolateral cell membrane. The protein resides in the endoplasmic reticulum membrane. It is found in the endoplasmic reticulum-Golgi intermediate compartment membrane. Its subcellular location is the golgi apparatus membrane. The protein localises to the golgi apparatus. It localises to the trans-Golgi network membrane. The protein resides in the membrane raft. The catalysed reaction is a 1,2-diacyl-sn-glycero-3-phosphate + H2O = a 1,2-diacyl-sn-glycerol + phosphate. It carries out the reaction 1,2-dihexadecanoyl-sn-glycero-3-phosphate + H2O = 1,2-dihexadecanoyl-sn-glycerol + phosphate. The enzyme catalyses 1,2-di-(9Z-octadecenoyl)-sn-glycero-3-phosphate + H2O = 1,2-di-(9Z-octadecenoyl)-sn-glycerol + phosphate. It catalyses the reaction a monoacyl-sn-glycero-3-phosphate + H2O = a monoacylglycerol + phosphate. The catalysed reaction is (9Z)-octadecenoyl-sn-glycero-3-phosphate + H2O = (9Z-octadecenoyl)-glycerol + phosphate. It carries out the reaction sphing-4-enine 1-phosphate + H2O = sphing-4-enine + phosphate. The enzyme catalyses an N-acylsphing-4-enine 1-phosphate + H2O = an N-acylsphing-4-enine + phosphate. It catalyses the reaction N-(octanoyl)-sphing-4-enine-1-phosphate + H2O = N-octanoylsphing-4-enine + phosphate. The catalysed reaction is N-(9Z-octadecenoyl)-ethanolamine phosphate + H2O = N-(9Z-octadecenoyl) ethanolamine + phosphate. Its pathway is lipid metabolism; phospholipid metabolism. With respect to regulation, magnesium-independent phospholipid phosphatase. Insensitive to N-ethylmaleimide. Inhibited by sphingosine, zinc ions and modestly by propanolol. Its function is as follows. Magnesium-independent phospholipid phosphatase of the plasma membrane that catalyzes the dephosphorylation of a variety of glycerolipid and sphingolipid phosphate esters including phosphatidate/PA, lysophosphatidate/LPA, diacylglycerol pyrophosphate/DGPP, sphingosine 1-phosphate/S1P and ceramide 1-phosphate/C1P. Also acts on N-oleoyl ethanolamine phosphate/N-(9Z-octadecenoyl)-ethanolamine phosphate, a potential physiological compound. Has both an extracellular and an intracellular phosphatase activity, allowing the hydrolysis and the cellular uptake of these bioactive lipid mediators from the milieu, regulating signal transduction in different cellular processes. Through the dephosphorylation of extracellular sphingosine-1-phosphate and the regulation of its extra- and intracellular availability, plays a role in vascular homeostasis, regulating endothelial cell migration, adhesion, survival, proliferation and the production of pro-inflammatory cytokines. By maintaining the appropriate levels of this lipid in the cerebellum, also ensure its proper development and function. Through its intracellular lipid phosphatase activity may act in early compartments of the secretory pathway, regulating the formation of Golgi to endoplasmic reticulum retrograde transport carriers. Independently of this phosphatase activity may also function in the Wnt signaling pathway and the stabilization of beta-catenin/CTNNB1, thereby regulating cell proliferation, migration and differentiation in angiogenesis or yet in tumor growth. Also plays a role in integrin-mediated cell-cell adhesion in angiogenesis. This chain is Phospholipid phosphatase 3, found in Bos taurus (Bovine).